A 234-amino-acid chain; its full sequence is MNEITLFIKSSSANAERRINPQWTVSQLKTKLVPIVGTPEQYQKLTYEPASSTVPGHVFTSEEENLDLGEFKLQPLGTIVVEDTRPPHLRLDFDDLSQVDKYVMPREQYENRTDSVYAWKKRNQLGRFNPDFEASKASRQESLKRELVDLQKNLNSRCCAAGERYGTIRYIGLVPEINNDNLWVGVEFDEPVGKNDGTVSGKRYFNAKNKHGSFLRSSEVEVGDFPPEDILEGL.

The Ubiquitin-like domain occupies 4-88 (ITLFIKSSSA…IVVEDTRPPH (85 aa)). The CAP-Gly domain maps to 174 to 216 (VPEINNDNLWVGVEFDEPVGKNDGTVSGKRYFNAKNKHGSFLR). Ser-213 is subject to Phosphoserine.

Belongs to the TBCB family. As to quaternary structure, binds to monomeric alpha-tubulin. Interacts with alp21.

It is found in the cytoplasm. The protein localises to the cytoskeleton. Required for microtubule function and cell polarity. Involved in the proper folding of alpha-tubulin. This is Cell polarity protein alp11 (alp11) from Schizosaccharomyces pombe (strain 972 / ATCC 24843) (Fission yeast).